We begin with the raw amino-acid sequence, 82 residues long: Large ribosomal subunit protein bL31B (82 aa).

This sequence belongs to the bacterial ribosomal protein bL31 family. Type B subfamily. In terms of assembly, part of the 50S ribosomal subunit.

The protein is Large ribosomal subunit protein bL31B of Dichelobacter nodosus (strain VCS1703A).